Consider the following 429-residue polypeptide: 3-phosphoshikimate 1-carboxyvinyltransferase (429 aa).

Residues Lys20, Ser21, and Arg25 each contribute to the 3-phosphoshikimate site. Lys20 serves as a coordination point for phosphoenolpyruvate. 2 residues coordinate phosphoenolpyruvate: Gly89 and Arg118. Positions 164, 165, 166, 192, 311, and 338 each coordinate 3-phosphoshikimate. Phosphoenolpyruvate is bound at residue Gln166. Catalysis depends on Asp311, which acts as the Proton acceptor. Arg342 and Arg384 together coordinate phosphoenolpyruvate.

This sequence belongs to the EPSP synthase family. Monomer.

The protein resides in the cytoplasm. The catalysed reaction is 3-phosphoshikimate + phosphoenolpyruvate = 5-O-(1-carboxyvinyl)-3-phosphoshikimate + phosphate. It functions in the pathway metabolic intermediate biosynthesis; chorismate biosynthesis. Its function is as follows. Catalyzes the transfer of the enolpyruvyl moiety of phosphoenolpyruvate (PEP) to the 5-hydroxyl of shikimate-3-phosphate (S3P) to produce enolpyruvyl shikimate-3-phosphate and inorganic phosphate. The polypeptide is 3-phosphoshikimate 1-carboxyvinyltransferase (Methanococcus maripaludis (strain C7 / ATCC BAA-1331)).